The chain runs to 108 residues: Glutaredoxin-1 (108 aa).

The Glutaredoxin domain maps to 3 to 106; it reads EEFVQQRLAN…DILSSIGVLR (104 aa). A disulfide bridge links C23 with C26.

The protein belongs to the glutaredoxin family.

The protein localises to the virion. Functionally, has thioltransferase and dehydroascorbate reductase activities. The protein is Glutaredoxin-1 (OPG075) of Ectromelia virus (strain Moscow) (ECTV).